The following is a 270-amino-acid chain: Flavin-dependent thymidylate synthase (270 aa).

Residues 13 to 218 (GFVRLVDQMG…PLAWAAFEEH (206 aa)) form the ThyX domain. Residues Ser59, 82-84 (RHR), and Glu90 each bind FAD. DUMP contacts are provided by residues 79–82 (QWFR), 90–94 (EISGR), and Arg157. Residues 82–92 (RHRTASVNEIS) carry the ThyX motif motif. FAD contacts are provided by residues 173–175 (DLH) and His179. Arg184 serves as a coordination point for dUMP. Catalysis depends on Arg184, which acts as the Involved in ionization of N3 of dUMP, leading to its activation.

This sequence belongs to the thymidylate synthase ThyX family. As to quaternary structure, homotetramer. Requires FAD as cofactor.

The enzyme catalyses dUMP + (6R)-5,10-methylene-5,6,7,8-tetrahydrofolate + NADPH + H(+) = dTMP + (6S)-5,6,7,8-tetrahydrofolate + NADP(+). It functions in the pathway pyrimidine metabolism; dTTP biosynthesis. Its function is as follows. Catalyzes the reductive methylation of 2'-deoxyuridine-5'-monophosphate (dUMP) to 2'-deoxythymidine-5'-monophosphate (dTMP) while utilizing 5,10-methylenetetrahydrofolate (mTHF) as the methyl donor, and NADPH and FADH(2) as the reductant. The chain is Flavin-dependent thymidylate synthase from Thermus thermophilus (strain ATCC 27634 / DSM 579 / HB8).